The sequence spans 370 residues: Flagellar P-ring protein (370 aa).

Positions 1–24 (MTLSKWILSFGLSVCLIVSHPVSA) are cleaved as a signal peptide.

Belongs to the FlgI family. The basal body constitutes a major portion of the flagellar organelle and consists of four rings (L,P,S, and M) mounted on a central rod.

The protein localises to the periplasm. Its subcellular location is the bacterial flagellum basal body. Its function is as follows. Assembles around the rod to form the L-ring and probably protects the motor/basal body from shearing forces during rotation. This chain is Flagellar P-ring protein, found in Nitrosomonas europaea (strain ATCC 19718 / CIP 103999 / KCTC 2705 / NBRC 14298).